The sequence spans 454 residues: Uridine kinase (454 aa).

28–35 contacts ATP; that stretch reads GPSGSGKT.

It belongs to the uridine kinase family.

It is found in the cytoplasm. The protein localises to the nucleus. The catalysed reaction is uridine + ATP = UMP + ADP + H(+). It catalyses the reaction cytidine + ATP = CMP + ADP + H(+). It functions in the pathway pyrimidine metabolism; CTP biosynthesis via salvage pathway; CTP from cytidine: step 1/3. The protein operates within pyrimidine metabolism; UMP biosynthesis via salvage pathway; UMP from uridine: step 1/1. Its function is as follows. Catalyzes the conversion of uridine into UMP and cytidine into CMP in the pyrimidine salvage pathway. The sequence is that of Uridine kinase (urk1) from Schizosaccharomyces pombe (strain 972 / ATCC 24843) (Fission yeast).